The following is a 1452-amino-acid chain: Receptor-type tyrosine-protein phosphatase mu (1452 aa).

Positions 1 to 20 (MRGLGTCLATLAGLLLTAAG) are cleaved as a signal peptide. Topologically, residues 21-742 (ETFSGGCLFD…PEKQTDHTVK (722 aa)) are extracellular. The region spanning 22-184 (TFSGGCLFDE…VKVLGHPCTR (163 aa)) is the MAM domain. A disulfide bridge links Cys-27 with Cys-36. N-linked (GlcNAc...) asparagine glycans are attached at residues Asn-72, Asn-92, Asn-131, and Asn-249. 2 cysteine pairs are disulfide-bonded: Cys-96-Cys-182 and Cys-206-Cys-260. The 92-residue stretch at 186–277 (PHFLRIQNVE…VGISNYAELV (92 aa)) folds into the Ig-like C2-type domain. 4 consecutive Fibronectin type-III domains span residues 284–379 (PIAP…CADP), 382–480 (GPRK…TDED), 482–587 (PGAV…SAPS), and 589–671 (PAYE…DSLQ). N-linked (GlcNAc...) asparagine glycosylation is found at Asn-406, Asn-414, Asn-454, Asn-534, Asn-544, Asn-598, Asn-651, and Asn-681. The helical transmembrane segment at 743 to 764 (IAGVIAGILLFVIIFLGVVLVM) threads the bilayer. Over 765 to 1452 (KKRKLAKKRK…EVALEYLNSG (688 aa)) the chain is Cytoplasmic. Ser-821 carries the post-translational modification Phosphoserine. Tyrosine-protein phosphatase domains are found at residues 900-1154 (FKEE…ILEA) and 1186-1448 (IKEE…ALEY). Substrate is bound by residues Asp-1063, 1095-1101 (CSAGAGR), and Gln-1139. The active-site Phosphocysteine intermediate is the Cys-1095. The Phosphocysteine intermediate role is filled by Cys-1389.

This sequence belongs to the protein-tyrosine phosphatase family. Receptor class 2B subfamily. As to quaternary structure, homodimer.

Its subcellular location is the cell membrane. It carries out the reaction O-phospho-L-tyrosyl-[protein] + H2O = L-tyrosyl-[protein] + phosphate. Receptor protein-tyrosine phosphatase that mediates homotypic cell-cell interactions and plays a role in adipogenic differentiation via modulation of p120 catenin/CTNND1 phosphorylation. Promotes CTNND1 dephosphorylation and prevents its cytoplasmic localization where it inhibits SLC2A4 membrane trafficking. In turn, SLC2A4 is directed to the plasma membrane and performs its glucose transporter function. This chain is Receptor-type tyrosine-protein phosphatase mu (PTPRM), found in Homo sapiens (Human).